We begin with the raw amino-acid sequence, 72 residues long: Translation initiation factor IF-1 (72 aa).

The region spanning 1-72 is the S1-like domain; it reads MSKEDVIEVE…TRGRITWRKK (72 aa).

Belongs to the IF-1 family. As to quaternary structure, component of the 30S ribosomal translation pre-initiation complex which assembles on the 30S ribosome in the order IF-2 and IF-3, IF-1 and N-formylmethionyl-tRNA(fMet); mRNA recruitment can occur at any time during PIC assembly.

It is found in the cytoplasm. Functionally, one of the essential components for the initiation of protein synthesis. Stabilizes the binding of IF-2 and IF-3 on the 30S subunit to which N-formylmethionyl-tRNA(fMet) subsequently binds. Helps modulate mRNA selection, yielding the 30S pre-initiation complex (PIC). Upon addition of the 50S ribosomal subunit IF-1, IF-2 and IF-3 are released leaving the mature 70S translation initiation complex. The protein is Translation initiation factor IF-1 of Alkaliphilus metalliredigens (strain QYMF).